The sequence spans 426 residues: Serine--tRNA ligase (426 aa).

L-serine is bound at residue 230-232; the sequence is TSE. 261 to 263 is a binding site for ATP; sequence RKE. L-serine is bound at residue glutamate 284. 348–351 contributes to the ATP binding site; that stretch reads EISS. Residue serine 385 participates in L-serine binding.

The protein belongs to the class-II aminoacyl-tRNA synthetase family. Type-1 seryl-tRNA synthetase subfamily. In terms of assembly, homodimer. The tRNA molecule binds across the dimer.

The protein localises to the cytoplasm. It catalyses the reaction tRNA(Ser) + L-serine + ATP = L-seryl-tRNA(Ser) + AMP + diphosphate + H(+). The enzyme catalyses tRNA(Sec) + L-serine + ATP = L-seryl-tRNA(Sec) + AMP + diphosphate + H(+). The protein operates within aminoacyl-tRNA biosynthesis; selenocysteinyl-tRNA(Sec) biosynthesis; L-seryl-tRNA(Sec) from L-serine and tRNA(Sec): step 1/1. Catalyzes the attachment of serine to tRNA(Ser). Is also able to aminoacylate tRNA(Sec) with serine, to form the misacylated tRNA L-seryl-tRNA(Sec), which will be further converted into selenocysteinyl-tRNA(Sec). The chain is Serine--tRNA ligase from Wolbachia pipientis subsp. Culex pipiens (strain wPip).